A 299-amino-acid polypeptide reads, in one-letter code: Taste receptor type 2 member 5 (299 aa).

Position 1 (Met1) is a topological domain, extracellular. The chain crosses the membrane as a helical span at residues 2-22; sequence LSAGLGLLMLVAVIEFLIGLI. Over 23–45 the chain is Cytoplasmic; the sequence is GNGILVVWSLREWIRKFSWSSYN. The helical transmembrane segment at 46-66 threads the bilayer; that stretch reads LIILGLAGCRFLLQWLIILDL. Over 67–82 the chain is Extracellular; sequence SLFPLFQSSSWLRYLN. The helical transmembrane segment at 83–103 threads the bilayer; it reads VFWVLVSQASLWFATFLSVFY. At 104–127 the chain is on the cytoplasmic side; that stretch reads CKKITTFDRPAYLWLKQRAYNLSL. The chain crosses the membrane as a helical span at residues 128–148; it reads WCLLGYFIISLLLTVQVGLTV. Topologically, residues 149 to 175 are extracellular; the sequence is HHPPQGNSSIRYPFEHWQYLYVFQLNS. Asn155 carries N-linked (GlcNAc...) asparagine glycosylation. Residues 176–196 form a helical membrane-spanning segment; that stretch reads GSYLPLMVFLVSSGMLIISLY. The Cytoplasmic segment spans residues 197–223; sequence THHKKMKVHSAGRRDARAKAHITALKS. The helical transmembrane segment at 224–244 threads the bilayer; that stretch reads LGCFLLLHLVYIVASPFSITS. The Extracellular portion of the chain corresponds to 245 to 253; it reads KTYPPDLTS. A helical transmembrane segment spans residues 254-274; sequence VFIWETLMAAYPSLHSLMLIM. The Cytoplasmic segment spans residues 275–299; that stretch reads GIPRVKQTCQKILWKTVCARRCWGP.

This sequence belongs to the G-protein coupled receptor T2R family.

It is found in the membrane. In terms of biological role, receptor that may play a role in the perception of bitterness and is gustducin-linked. May play a role in sensing the chemical composition of the gastrointestinal content. The activity of this receptor may stimulate alpha gustducin, mediate PLC-beta-2 activation and lead to the gating of TRPM5. This Papio hamadryas (Hamadryas baboon) protein is Taste receptor type 2 member 5 (TAS2R5).